A 426-amino-acid chain; its full sequence is DNA polymerase processivity factor component OPG148 (426 aa).

Belongs to the orthopoxvirus OPG148 family. In terms of assembly, interacts with the DNA polymerase catalytic subunit OPG071. Interacts with UDG/OPG116. Component of the uracil-DNA glycosylase(UDG)-OPG148-polymerase complex; OPG148 and UDG form a heterodimeric processivity factor that associates with OPG071 to form the processive polymerase holoenzyme. Interacts with OPG117.

In terms of biological role, plays an essential role in viral DNA replication by acting as the polymerase processivity factor together with protein OPG116. Serves as a bridge which links the DNA polymerase OPG071 and the uracil DNA glycosylase. The polypeptide is DNA polymerase processivity factor component OPG148 (OPG148) (Variola virus (isolate Human/India/Ind3/1967) (VARV)).